The chain runs to 319 residues: Ribonucleoside-diphosphate reductase small chain (319 aa).

Fe cation is bound by residues aspartate 70, glutamate 101, and histidine 104. Tyrosine 108 is a catalytic residue. 3 residues coordinate Fe cation: glutamate 163, glutamate 197, and histidine 200. The interval 313-319 is interaction with R1; that stretch reads FSLDVDF.

The protein belongs to the ribonucleoside diphosphate reductase small chain family. As to quaternary structure, interacts with RNR1/OPG080 subunit. Can interact with host RNR1 supunit. It depends on Fe cation as a cofactor.

The enzyme catalyses a 2'-deoxyribonucleoside 5'-diphosphate + [thioredoxin]-disulfide + H2O = a ribonucleoside 5'-diphosphate + [thioredoxin]-dithiol. Functionally, ribonucleoside-diphosphate reductase holoenzyme provides the precursors necessary for viral DNA synthesis. Allows virus growth in non-dividing cells. Catalyzes the biosynthesis of deoxyribonucleotides from the corresponding ribonucleotides. The polypeptide is Ribonucleoside-diphosphate reductase small chain (OPG048) (Vaccinia virus (strain L-IVP) (VACV)).